A 202-amino-acid chain; its full sequence is Glycerol-3-phosphate acyltransferase (202 aa).

4 consecutive transmembrane segments (helical) span residues 1 to 21, 84 to 104, 116 to 136, and 143 to 163; these read MTLI…FGVL, AVAA…FLHF, ILLG…LAVA, and SLAA…FLGF.

This sequence belongs to the PlsY family. In terms of assembly, probably interacts with PlsX.

Its subcellular location is the cell inner membrane. It catalyses the reaction an acyl phosphate + sn-glycerol 3-phosphate = a 1-acyl-sn-glycero-3-phosphate + phosphate. Its pathway is lipid metabolism; phospholipid metabolism. Catalyzes the transfer of an acyl group from acyl-phosphate (acyl-PO(4)) to glycerol-3-phosphate (G3P) to form lysophosphatidic acid (LPA). This enzyme utilizes acyl-phosphate as fatty acyl donor, but not acyl-CoA or acyl-ACP. This is Glycerol-3-phosphate acyltransferase from Nitrosospira multiformis (strain ATCC 25196 / NCIMB 11849 / C 71).